A 161-amino-acid polypeptide reads, in one-letter code: Endoribonuclease YbeY (161 aa).

His-121, His-125, and His-131 together coordinate Zn(2+).

This sequence belongs to the endoribonuclease YbeY family. It depends on Zn(2+) as a cofactor.

It is found in the cytoplasm. Single strand-specific metallo-endoribonuclease involved in late-stage 70S ribosome quality control and in maturation of the 3' terminus of the 16S rRNA. In Bordetella avium (strain 197N), this protein is Endoribonuclease YbeY.